A 341-amino-acid polypeptide reads, in one-letter code: Spore photoproduct lyase (341 aa).

Positions 76–304 (SKPSAEYAIP…ESKRKYKWGR (229 aa)) constitute a Radical SAM core domain. Positions 90, 94, and 97 each coordinate [4Fe-4S] cluster. A DNA-binding region (H-T-H motif) is located at residues 217 to 234 (QAARKVAGAGYKLGFVVA).

This sequence belongs to the radical SAM superfamily. SPL family. Monomer or homodimer. [4Fe-4S] cluster is required as a cofactor. Requires S-adenosyl-L-methionine as cofactor.

It carries out the reaction (5R)-5,6-dihydro-5-(thymidin-7-yl)thymidine in DNA = a thymidine dimer in DNA. In terms of biological role, involved in repair of UV radiation-induced DNA damage during spore germination. Can repair thymine dimer 5-thyminyl-5,6-dihydrothymine (known as spore photoproduct (SP)) by in situ monomerization of SP to two thymines. The polypeptide is Spore photoproduct lyase (splG) (Geobacillus sp. (strain Y412MC61)).